Here is a 570-residue protein sequence, read N- to C-terminus: Phosphoribosylaminoimidazole carboxylase (570 aa).

The region spanning 110–297 is the ATP-grasp domain; it reads KQHLVKNRIP…QFEAHLRAIL (188 aa). 137–192 contacts ATP; that stretch reads GSSLGYPFVLKSRTLAYDGRGNFVVKSEEDIEKGLEFLANRPLYAEKWASFKKELS.

This sequence in the C-terminal section; belongs to the AIR carboxylase family. Class I subfamily.

It carries out the reaction 5-amino-1-(5-phospho-D-ribosyl)imidazole-4-carboxylate + H(+) = 5-amino-1-(5-phospho-beta-D-ribosyl)imidazole + CO2. It participates in purine metabolism; IMP biosynthesis via de novo pathway; 5-amino-1-(5-phospho-D-ribosyl)imidazole-4-carboxylate from 5-amino-1-(5-phospho-D-ribosyl)imidazole (carboxylase route): step 1/1. This chain is Phosphoribosylaminoimidazole carboxylase (ADE2), found in Candida glabrata (strain ATCC 2001 / BCRC 20586 / JCM 3761 / NBRC 0622 / NRRL Y-65 / CBS 138) (Yeast).